The following is a 291-amino-acid chain: Putative heme-binding peroxidase (291 aa).

His-61 (proton acceptor) is an active-site residue. Residue His-185 coordinates heme b. Catalysis depends on Trp-201, which acts as the Tryptophan radical intermediate.

Belongs to the peroxidase family. Cytochrome c peroxidase subfamily. The cofactor is heme b.

Destroys radicals which are normally produced within the cells and which are toxic to biological systems. The protein is Putative heme-binding peroxidase (CCP2) of Candida albicans (strain SC5314 / ATCC MYA-2876) (Yeast).